The chain runs to 161 residues: Small ribosomal subunit protein eS6 (161 aa).

Residues 119–161 (VLLGEEEPEDADDDGDSDVDADEATDTDAGSEEDNDDDIADAE) are disordered. A compositionally biased stretch (acidic residues) spans 122-161 (GEEEPEDADDDGDSDVDADEATDTDAGSEEDNDDDIADAE).

Belongs to the eukaryotic ribosomal protein eS6 family.

The polypeptide is Small ribosomal subunit protein eS6 (Haloquadratum walsbyi (strain DSM 16790 / HBSQ001)).